A 423-amino-acid chain; its full sequence is Serine hydroxymethyltransferase (423 aa).

(6S)-5,6,7,8-tetrahydrofolate is bound by residues leucine 120 and 124–126 (GHL). At lysine 229 the chain carries N6-(pyridoxal phosphate)lysine. 353–355 (SPF) serves as a coordination point for (6S)-5,6,7,8-tetrahydrofolate.

This sequence belongs to the SHMT family. As to quaternary structure, homodimer. Requires pyridoxal 5'-phosphate as cofactor.

The protein resides in the cytoplasm. The catalysed reaction is (6R)-5,10-methylene-5,6,7,8-tetrahydrofolate + glycine + H2O = (6S)-5,6,7,8-tetrahydrofolate + L-serine. It participates in one-carbon metabolism; tetrahydrofolate interconversion. It functions in the pathway amino-acid biosynthesis; glycine biosynthesis; glycine from L-serine: step 1/1. Catalyzes the reversible interconversion of serine and glycine with tetrahydrofolate (THF) serving as the one-carbon carrier. This reaction serves as the major source of one-carbon groups required for the biosynthesis of purines, thymidylate, methionine, and other important biomolecules. Also exhibits THF-independent aldolase activity toward beta-hydroxyamino acids, producing glycine and aldehydes, via a retro-aldol mechanism. The sequence is that of Serine hydroxymethyltransferase from Prochlorococcus marinus (strain MIT 9515).